A 113-amino-acid polypeptide reads, in one-letter code: Dolichyl-diphosphooligosaccharide--protein glycosyltransferase subunit dad1 (113 aa).

Topologically, residues 1–30 are cytoplasmic; that stretch reads MSVSVFSVVSRFLDEYVSSTPQRLKLLDAY. Residues 31-51 traverse the membrane as a helical segment; that stretch reads LLYILLTGALQFLYCLLVGTF. A topological domain (lumenal) is located at residue proline 52. The helical transmembrane segment at 53-73 threads the bilayer; that stretch reads FNSFLSGFISSVGSFILAVCL. Topologically, residues 74–92 are cytoplasmic; sequence RIQINPQNKSDFQGISPER. A helical membrane pass occupies residues 93–113; that stretch reads AFADFLFANTILHLVVVNFIG.

It belongs to the DAD/OST2 family. As to quaternary structure, component of the oligosaccharyltransferase (OST) complex.

It is found in the endoplasmic reticulum membrane. It functions in the pathway protein modification; protein glycosylation. Subunit of the oligosaccharyl transferase (OST) complex that catalyzes the initial transfer of a defined glycan (Glc(3)Man(9)GlcNAc(2) in eukaryotes) from the lipid carrier dolichol-pyrophosphate to an asparagine residue within an Asn-X-Ser/Thr consensus motif in nascent polypeptide chains, the first step in protein N-glycosylation. N-glycosylation occurs cotranslationally and the complex associates with the Sec61 complex at the channel-forming translocon complex that mediates protein translocation across the endoplasmic reticulum (ER). All subunits are required for a maximal enzyme activity. This chain is Dolichyl-diphosphooligosaccharide--protein glycosyltransferase subunit dad1, found in Xenopus laevis (African clawed frog).